We begin with the raw amino-acid sequence, 475 residues long: Ribulose bisphosphate carboxylase large chain (475 aa).

The residue at position 14 (lysine 14) is an N6,N6,N6-trimethyllysine. 2 residues coordinate substrate: asparagine 123 and threonine 173. The active-site Proton acceptor is the lysine 175. Lysine 177 is a substrate binding site. Positions 201, 203, and 204 each coordinate Mg(2+). Lysine 201 carries the post-translational modification N6-carboxylysine. Histidine 294 functions as the Proton acceptor in the catalytic mechanism. Residues arginine 295, histidine 327, and serine 379 each contribute to the substrate site.

Belongs to the RuBisCO large chain family. Type I subfamily. Heterohexadecamer of 8 large chains and 8 small chains; disulfide-linked. The disulfide link is formed within the large subunit homodimers. Requires Mg(2+) as cofactor. Post-translationally, the disulfide bond which can form in the large chain dimeric partners within the hexadecamer appears to be associated with oxidative stress and protein turnover.

Its subcellular location is the plastid. It is found in the chloroplast. It carries out the reaction 2 (2R)-3-phosphoglycerate + 2 H(+) = D-ribulose 1,5-bisphosphate + CO2 + H2O. The catalysed reaction is D-ribulose 1,5-bisphosphate + O2 = 2-phosphoglycolate + (2R)-3-phosphoglycerate + 2 H(+). In terms of biological role, ruBisCO catalyzes two reactions: the carboxylation of D-ribulose 1,5-bisphosphate, the primary event in carbon dioxide fixation, as well as the oxidative fragmentation of the pentose substrate in the photorespiration process. Both reactions occur simultaneously and in competition at the same active site. This is Ribulose bisphosphate carboxylase large chain from Actinidia chinensis (Kiwi).